A 477-amino-acid polypeptide reads, in one-letter code: Glycogen synthase (477 aa).

Lysine 15 is a binding site for ADP-alpha-D-glucose.

Belongs to the glycosyltransferase 1 family. Bacterial/plant glycogen synthase subfamily.

It carries out the reaction [(1-&gt;4)-alpha-D-glucosyl](n) + ADP-alpha-D-glucose = [(1-&gt;4)-alpha-D-glucosyl](n+1) + ADP + H(+). It participates in glycan biosynthesis; glycogen biosynthesis. Functionally, synthesizes alpha-1,4-glucan chains using ADP-glucose. This Erwinia tasmaniensis (strain DSM 17950 / CFBP 7177 / CIP 109463 / NCPPB 4357 / Et1/99) protein is Glycogen synthase.